A 76-amino-acid polypeptide reads, in one-letter code: Conotoxin VnMEKL-021 (76 aa).

The first 19 residues, 1–19, serve as a signal peptide directing secretion; sequence MQKLTILLLVAAVLMSTQA. The propeptide occupies 20-37; the sequence is LIKGGGEKRPKEKIKFLS. 3 disulfides stabilise this stretch: Cys-51-Cys-65, Cys-58-Cys-69, and Cys-64-Cys-73.

The protein belongs to the conotoxin O2 superfamily. In terms of tissue distribution, expressed by the venom duct.

It is found in the secreted. In Conus ventricosus (Mediterranean cone), this protein is Conotoxin VnMEKL-021.